The sequence spans 224 residues: tRNA (guanine-N(7)-)-methyltransferase (224 aa).

E54, E79, E106, and D129 together coordinate S-adenosyl-L-methionine. D129 is an active-site residue. K133 and D165 together coordinate substrate.

The protein belongs to the class I-like SAM-binding methyltransferase superfamily. TrmB family.

It catalyses the reaction guanosine(46) in tRNA + S-adenosyl-L-methionine = N(7)-methylguanosine(46) in tRNA + S-adenosyl-L-homocysteine. It functions in the pathway tRNA modification; N(7)-methylguanine-tRNA biosynthesis. Its function is as follows. Catalyzes the formation of N(7)-methylguanine at position 46 (m7G46) in tRNA. The polypeptide is tRNA (guanine-N(7)-)-methyltransferase (Chlamydia abortus (strain DSM 27085 / S26/3) (Chlamydophila abortus)).